Here is a 1021-residue protein sequence, read N- to C-terminus: Translation initiation factor IF-2 (1021 aa).

The segment at 50 to 422 (AFPAEGGSAS…RMGAMVPRGN (373 aa)) is disordered. A compositionally biased stretch (gly residues) spans 57–71 (SASGGRPGGRPGPGN). Over residues 75 to 95 (PAPPRPGLAPRPGPRPVPGRP) the composition is skewed to pro residues. The segment covering 96 to 112 (GPAARPGGPAAPSAPAA) has biased composition (low complexity). Over residues 113–129 (PSAPAPGAPAASPPASQ) the composition is skewed to pro residues. Low complexity-rich tracts occupy residues 130 to 159 (PRPI…ASGP), 167 to 178 (GGPAAPGRARPG), and 187 to 196 (SAPSAPSAGG). The span at 198-208 (RPGPRPGPRPS) shows a compositional bias: pro residues. A compositionally biased stretch (low complexity) spans 219-233 (SAGPRQSAGQSGSGP). 2 stretches are compositionally biased toward pro residues: residues 234 to 254 (ASPP…PRPG) and 262 to 273 (RPSPGSMPPRPG). Composition is skewed to gly residues over residues 275–291 (RPGG…GSGG) and 306–389 (GAPG…GGRG). The span at 390–401 (RPGRQRKSKRAK) shows a compositional bias: basic residues. In terms of domain architecture, tr-type G spans 514–686 (IRPPVVTVMG…IILTADASLD (173 aa)). A G1 region spans residues 523–530 (GHVDHGKT). 523–530 (GHVDHGKT) provides a ligand contact to GTP. The segment at 548-552 (GITQH) is G2. Positions 573–576 (DTPG) are G3. GTP is bound by residues 573–577 (DTPGH) and 627–630 (NKVD). The tract at residues 627–630 (NKVD) is G4. The segment at 663-665 (SAR) is G5.

The protein belongs to the TRAFAC class translation factor GTPase superfamily. Classic translation factor GTPase family. IF-2 subfamily.

Its subcellular location is the cytoplasm. Functionally, one of the essential components for the initiation of protein synthesis. Protects formylmethionyl-tRNA from spontaneous hydrolysis and promotes its binding to the 30S ribosomal subunits. Also involved in the hydrolysis of GTP during the formation of the 70S ribosomal complex. The polypeptide is Translation initiation factor IF-2 (Frankia alni (strain DSM 45986 / CECT 9034 / ACN14a)).